The chain runs to 268 residues: Chymotrypsin-C (268 aa).

An N-terminal signal peptide occupies residues 1–16; sequence MLGITVLAAILACASC. A propeptide spans 17–29 (activation peptide); that stretch reads CGNPAFPPNLSTR. 5 cysteine pairs are disulfide-bonded: Cys-17/Cys-141, Cys-59/Cys-75, Cys-155/Cys-222, Cys-186/Cys-202, and Cys-212/Cys-243. The N-linked (GlcNAc...) asparagine glycan is linked to Asn-25. In terms of domain architecture, Peptidase S1 spans 30-267; that stretch reads VVGGEDAVPN…YNDWINEKIQ (238 aa). His-74 functions as the Charge relay system in the catalytic mechanism. N-linked (GlcNAc...) asparagine glycosylation is present at Asn-90. The active-site Charge relay system is the Asp-121. Residue Ser-216 is the Charge relay system of the active site.

This sequence belongs to the peptidase S1 family. Elastase subfamily. Pancreas.

It carries out the reaction Preferential cleavage: Leu-|-Xaa, Tyr-|-Xaa, Phe-|-Xaa, Met-|-Xaa, Trp-|-Xaa, Gln-|-Xaa, Asn-|-Xaa.. Functionally, regulates activation and degradation of trypsinogens and procarboxypeptidases by targeting specific cleavage sites within their zymogen precursors. Has chymotrypsin-type protease activity and hypocalcemic activity. Cleaves TRY4 and TRY5 and thereby inhibits their autoactivation. The protein is Chymotrypsin-C (Ctrc) of Rattus norvegicus (Rat).